Consider the following 141-residue polypeptide: Small ribosomal subunit protein eS12 (141 aa).

Belongs to the eukaryotic ribosomal protein eS12 family. In terms of assembly, component of the small ribosomal subunit. Mature ribosomes consist of a small (40S) and a large (60S) subunit. The 40S subunit contains about 32 different proteins and 1 molecule of RNA (18S). The 60S subunit contains about 42 different proteins and 3 molecules of RNA (28S, 5.8S and 5S).

The protein resides in the cytoplasm. In terms of biological role, component of the ribosome, a large ribonucleoprotein complex responsible for the synthesis of proteins in the cell. The small ribosomal subunit (SSU) binds messenger RNAs (mRNAs) and translates the encoded message by selecting cognate aminoacyl-transfer RNA (tRNA) molecules. The large subunit (LSU) contains the ribosomal catalytic site termed the peptidyl transferase center (PTC), which catalyzes the formation of peptide bonds, thereby polymerizing the amino acids delivered by tRNAs into a polypeptide chain. The nascent polypeptides leave the ribosome through a tunnel in the LSU and interact with protein factors that function in enzymatic processing, targeting, and the membrane insertion of nascent chains at the exit of the ribosomal tunnel. This chain is Small ribosomal subunit protein eS12, found in Plasmodium falciparum (isolate 3D7).